Here is a 520-residue protein sequence, read N- to C-terminus: MKEAVKNVKPKVPAKKRIITGSKTKKKVFVKKKPPDKKPLKKPVKKTVKTDKPKSIYVPNKDLKISKWIPTPKKEFTEIETNSWYEHRKFENPNKSPVQTYNKIVPVVPPESIKQQNLANKRKKTNRPIVFISSEKIRIYPTKDQQKILQTWFRLFAYMYNCTIDYINSKKVVLESGRINVAATRKVCNKISVRKAQKTIRDNLIQSTNPSIMTHIIDEAIGLACSNYKTCLTNYIERHIKKFDIKPWNMSKRKKIIIIEANFFKKGTFCPTVFPKMESSKPLTMIDKTVTLQYDSDTRKYILFVPRVTPKYSVNKEKNSCGIDPGLRDFLTVYSENETQSICPIEIVVNTTKNEYKKIDKINEIIKTKPNLNSKRKKKLNRGLRKYHRRVTNKMKDMHYKVSHELVNTFDKICIGKLNVKSILSKANTVLKSALKRKLATLSFYRFTQRLTHMGYKYGTEVVNVNEYLTTKTCSNCGKIKDLGASKIYECESCGMYADRDENAAKNILKVGLKPWYKQK.

Positions 21–47 (GSKTKKKVFVKKKPPDKKPLKKPVKKT) are enriched in basic residues. The disordered stretch occupies residues 21–52 (GSKTKKKVFVKKKPPDKKPLKKPVKKTVKTDK). The Zn(2+) site is built by C474, C477, C491, and C494.

This sequence in the central section; belongs to the transposase 2 family. The protein in the C-terminal section; belongs to the transposase 35 family.

In Acanthamoeba polyphaga mimivirus (APMV), this protein is TnpB-like protein L79.